Reading from the N-terminus, the 114-residue chain is Phosphoribosyl-AMP cyclohydrolase (114 aa).

Mg(2+) is bound at residue D76. C77 is a binding site for Zn(2+). Positions 78 and 80 each coordinate Mg(2+). Residues C93 and C100 each coordinate Zn(2+).

This sequence belongs to the PRA-CH family. Homodimer. Mg(2+) serves as cofactor. The cofactor is Zn(2+).

The protein resides in the cytoplasm. It carries out the reaction 1-(5-phospho-beta-D-ribosyl)-5'-AMP + H2O = 1-(5-phospho-beta-D-ribosyl)-5-[(5-phospho-beta-D-ribosylamino)methylideneamino]imidazole-4-carboxamide. It participates in amino-acid biosynthesis; L-histidine biosynthesis; L-histidine from 5-phospho-alpha-D-ribose 1-diphosphate: step 3/9. In terms of biological role, catalyzes the hydrolysis of the adenine ring of phosphoribosyl-AMP. This is Phosphoribosyl-AMP cyclohydrolase from Streptococcus sanguinis (strain SK36).